Here is a 216-residue protein sequence, read N- to C-terminus: UPF0502 protein Spea_2482 (216 aa).

It belongs to the UPF0502 family.

The polypeptide is UPF0502 protein Spea_2482 (Shewanella pealeana (strain ATCC 700345 / ANG-SQ1)).